The following is a 261-amino-acid chain: tRNA pseudouridine synthase A (261 aa).

Asp-51 serves as the catalytic Nucleophile. Tyr-109 contributes to the substrate binding site.

This sequence belongs to the tRNA pseudouridine synthase TruA family. In terms of assembly, homodimer.

It carries out the reaction uridine(38/39/40) in tRNA = pseudouridine(38/39/40) in tRNA. In terms of biological role, formation of pseudouridine at positions 38, 39 and 40 in the anticodon stem and loop of transfer RNAs. In Shewanella sp. (strain W3-18-1), this protein is tRNA pseudouridine synthase A.